The primary structure comprises 351 residues: Phenylalanine--tRNA ligase alpha subunit (351 aa).

The tract at residues 45–69 (LGDDAPIPAARRSLGSLPKDQRKDA) is disordered. Glu269 is a binding site for Mg(2+).

Belongs to the class-II aminoacyl-tRNA synthetase family. Phe-tRNA synthetase alpha subunit type 1 subfamily. In terms of assembly, tetramer of two alpha and two beta subunits. The cofactor is Mg(2+).

The protein resides in the cytoplasm. The catalysed reaction is tRNA(Phe) + L-phenylalanine + ATP = L-phenylalanyl-tRNA(Phe) + AMP + diphosphate + H(+). The protein is Phenylalanine--tRNA ligase alpha subunit of Corynebacterium jeikeium (strain K411).